The following is a 125-amino-acid chain: Large ribosomal subunit protein bL12 (125 aa).

The protein belongs to the bacterial ribosomal protein bL12 family. In terms of assembly, homodimer. Part of the ribosomal stalk of the 50S ribosomal subunit. Forms a multimeric L10(L12)X complex, where L10 forms an elongated spine to which 2 to 4 L12 dimers bind in a sequential fashion. Binds GTP-bound translation factors.

Functionally, forms part of the ribosomal stalk which helps the ribosome interact with GTP-bound translation factors. Is thus essential for accurate translation. This chain is Large ribosomal subunit protein bL12, found in Thermoanaerobacter sp. (strain X514).